The sequence spans 264 residues: Undecaprenyl-diphosphatase (264 aa).

Helical transmembrane passes span G15 to F37, A42 to W62, Y84 to I104, L108 to V128, V143 to F163, I182 to D202, F217 to I237, and L243 to W263.

The protein belongs to the UppP family.

It is found in the cell inner membrane. It catalyses the reaction di-trans,octa-cis-undecaprenyl diphosphate + H2O = di-trans,octa-cis-undecaprenyl phosphate + phosphate + H(+). In terms of biological role, catalyzes the dephosphorylation of undecaprenyl diphosphate (UPP). Confers resistance to bacitracin. In Maridesulfovibrio salexigens (strain ATCC 14822 / DSM 2638 / NCIMB 8403 / VKM B-1763) (Desulfovibrio salexigens), this protein is Undecaprenyl-diphosphatase.